A 225-amino-acid polypeptide reads, in one-letter code: Insulin-induced gene 2 protein (225 aa).

Topologically, residues 1-28 are cytoplasmic; the sequence is MAENDAKPTLPKKSGPYISSVTSHGMNL. The chain crosses the membrane as a helical span at residues 29–51; the sequence is VIRGIVLFFIGVFLALVLNLLQI. Over 52-70 the chain is Lumenal; the sequence is QRNVTLFPPDVITSIFSSA. A helical membrane pass occupies residues 71–88; it reads WWVPPCCGTASAVIGLLY. At 89–103 the chain is on the cytoplasmic side; sequence PCMDRHLGEPHKFKR. A helical transmembrane segment spans residues 104–126; the sequence is EWSSVMRCVAVFVGINHASAKVD. The Lumenal segment spans residues 127–129; that stretch reads FAN. A helical transmembrane segment spans residues 130–148; sequence NIQLSLTLAALSIGLWWTF. Topologically, residues 149–153 are cytoplasmic; it reads DRSRS. The chain crosses the membrane as a helical span at residues 154-175; the sequence is GFGLGVGIAFLATLVSQLLVYN. Topologically, residues 176 to 189 are lumenal; that stretch reads GVYQYTSPDFLYVR. Residues 190–207 form a helical membrane-spanning segment; the sequence is SWLPCIFFAGGITMGNIG. The Cytoplasmic segment spans residues 208–225; sequence RQLAMYECKVIAEKSHED. The KxHxx motif lies at 219 to 225; that stretch reads AEKSHED.

It belongs to the INSIG family. In terms of assembly, interacts with SCAP; interaction is direct and only takes place in the presence of sterols; it prevents interaction between SCAP and the coat protein complex II (COPII). Associates with the SCAP-SREBP complex; association is mediated via its interaction with SCAP and only takes place in the presence of sterols.

Its subcellular location is the endoplasmic reticulum membrane. Functionally, oxysterol-binding protein that mediates feedback control of cholesterol synthesis by controlling both endoplasmic reticulum to Golgi transport of SCAP and degradation of HMGCR. Acts as a negative regulator of cholesterol biosynthesis by mediating the retention of the SCAP-SREBP complex in the endoplasmic reticulum, thereby blocking the processing of sterol regulatory element-binding proteins (SREBPs). Binds oxysterol, including 22-hydroxycholesterol, 24-hydroxycholesterol, 25-hydroxycholesterol and 27-hydroxycholesterol, regulating interaction with SCAP and retention of the SCAP-SREBP complex in the endoplasmic reticulum. In presence of oxysterol, interacts with SCAP, retaining the SCAP-SREBP complex in the endoplasmic reticulum, thereby preventing SCAP from escorting SREBPs to the Golgi. Sterol deprivation reduces oxysterol-binding, disrupting the interaction between INSIG2 and SCAP, thereby promoting Golgi transport of the SCAP-SREBP complex, followed by processing and nuclear translocation of SREBPs. Also regulates cholesterol synthesis by regulating degradation of HMGCR. The chain is Insulin-induced gene 2 protein from Gallus gallus (Chicken).